A 737-amino-acid polypeptide reads, in one-letter code: Alpha-adducin (737 aa).

Met1 carries the N-acetylmethionine modification. Residues 1 to 21 form a disordered region; that stretch reads MNGDSRAAVVTSPPPTTAPHK. Ser12 carries the post-translational modification Phosphoserine. Phosphoserine; by PKA is present on Ser59. At Ser64 the chain carries Phosphoserine. Thr331 is modified (phosphothreonine). 5 positions are modified to phosphoserine: Ser334, Ser353, Ser355, Ser358, and Ser366. Ser408 carries the post-translational modification Phosphoserine; by PKA. Polar residues predominate over residues 419 to 430; that stretch reads YSFTSDGDSGTC. 2 disordered regions span residues 419–490 and 576–737; these read YSFT…NLFV and RREV…KSES. Ser427 is subject to Phosphoserine. Position 429 is a phosphothreonine (Thr429). A Phosphoserine modification is found at Ser431. Phosphoserine; by PKA is present on Ser436. Thr445 is subject to Phosphothreonine; by ROCK2. Residues Ser464 and Ser465 each carry the phosphoserine modification. Position 480 is a phosphothreonine; by ROCK2 (Thr480). Residue Ser481 is modified to Phosphoserine; by PKA. The span at 576–601 shows a compositional bias: basic and acidic residues; the sequence is RREVERKQKGSEENLDEAREQKEKSP. A phosphoserine mark is found at Ser586, Ser600, and Ser613. Residues 602–614 are compositionally biased toward pro residues; that stretch reads PDQPAVPYPPPST. Thr614 is modified (phosphothreonine). Residues Ser678, Ser707, Ser710, and Ser714 each carry the phosphoserine modification. Over residues 687 to 714 the composition is skewed to low complexity; sequence PVAEEAAPSAAEEGAAADPGSDGSPGKS. Basic residues predominate over residues 715 to 737; sequence PSKKKKKFRTPSFLKKSKKKSES. Ser716 is modified (phosphoserine; by PKC). Residues 717-734 form an interaction with calmodulin region; the sequence is KKKKKFRTPSFLKKSKKK. A Phosphoserine; by PKA and PKC modification is found at Ser726.

The protein belongs to the aldolase class II family. Adducin subfamily. Heterodimer of an alpha and a beta subunit or an alpha and a gamma subunit.

Its subcellular location is the cytoplasm. The protein resides in the cytoskeleton. It localises to the cell membrane. Functionally, membrane-cytoskeleton-associated protein that promotes the assembly of the spectrin-actin network. Binds to calmodulin. In Pongo abelii (Sumatran orangutan), this protein is Alpha-adducin (ADD1).